Here is a 126-residue protein sequence, read N- to C-terminus: Small ribosomal subunit protein uS12 (126 aa).

The disordered stretch occupies residues Met-1 to Asp-26. Asp-89 is modified (3-methylthioaspartic acid). A disordered region spans residues Leu-102–Lys-126. The span at Ala-113–Lys-126 shows a compositional bias: basic residues.

It belongs to the universal ribosomal protein uS12 family. In terms of assembly, part of the 30S ribosomal subunit. Contacts proteins S8 and S17. May interact with IF1 in the 30S initiation complex.

With S4 and S5 plays an important role in translational accuracy. In terms of biological role, interacts with and stabilizes bases of the 16S rRNA that are involved in tRNA selection in the A site and with the mRNA backbone. Located at the interface of the 30S and 50S subunits, it traverses the body of the 30S subunit contacting proteins on the other side and probably holding the rRNA structure together. The combined cluster of proteins S8, S12 and S17 appears to hold together the shoulder and platform of the 30S subunit. This is Small ribosomal subunit protein uS12 from Burkholderia mallei (strain ATCC 23344).